The primary structure comprises 490 residues: C-type lectin domain family 14 member A (490 aa).

The first 21 residues, 1–21 (MRPAFALCLLWQALWPGPGGG), serve as a signal peptide directing secretion. The Extracellular portion of the chain corresponds to 22–397 (EHPTADRAGC…TPQAFDSSSA (376 aa)). The C-type lectin domain occupies 33–173 (ASGACYSLHH…LRANGYLCKY (141 aa)). The cysteines at positions 143 and 162 are disulfide-linked. The N-linked (GlcNAc...) asparagine glycan is linked to Asn189. In terms of domain architecture, EGF-like spans 245 to 287 (PCPGRYLRAGKCAELPNCLDDLGGFACECATGFELGKDGRSCV). The tract at residues 286-349 (CVTSGEGQPT…VTSIPEIPRW (64 aa)) is disordered. Residues 301–315 (VPTRRPPATATSPVP) are compositionally biased toward low complexity. N-linked (GlcNAc...) asparagine glycosylation is present at Asn381. Residues 398-418 (VVFIFVSTAVVVLVILTMTVL) form a helical membrane-spanning segment. Residues 419-490 (GLVKLCFHES…AESPLGSSDA (72 aa)) are Cytoplasmic-facing. Residues 428–461 (SPSSQPRKESMGPPGLESDPEPAALGSSSAHCTN) are disordered.

The protein localises to the membrane. This is C-type lectin domain family 14 member A (CLEC14A) from Homo sapiens (Human).